A 390-amino-acid chain; its full sequence is 3-ketoacyl-CoA thiolase (390 aa).

Catalysis depends on C95, which acts as the Acyl-thioester intermediate. Active-site proton acceptor residues include H346 and C376.

The protein belongs to the thiolase-like superfamily. Thiolase family. As to quaternary structure, heterotetramer of two alpha chains (FadB) and two beta chains (FadA).

It localises to the cytoplasm. The enzyme catalyses an acyl-CoA + acetyl-CoA = a 3-oxoacyl-CoA + CoA. It participates in lipid metabolism; fatty acid beta-oxidation. Functionally, catalyzes the final step of fatty acid oxidation in which acetyl-CoA is released and the CoA ester of a fatty acid two carbons shorter is formed. This chain is 3-ketoacyl-CoA thiolase, found in Psychrobacter cryohalolentis (strain ATCC BAA-1226 / DSM 17306 / VKM B-2378 / K5).